The primary structure comprises 450 residues: Probable malate:quinone oxidoreductase (450 aa).

It belongs to the MQO family. The cofactor is FAD.

The catalysed reaction is (S)-malate + a quinone = a quinol + oxaloacetate. The protein operates within carbohydrate metabolism; tricarboxylic acid cycle; oxaloacetate from (S)-malate (quinone route): step 1/1. The chain is Probable malate:quinone oxidoreductase from Helicobacter acinonychis (strain Sheeba).